The following is a 370-amino-acid chain: Subtilisin-like protease (370 aa).

Residues 1–17 (MIASIVFFIVLVDGVAT) form the signal peptide. Residues D13, H35, and S190 each act as charge relay system in the active site. The Peptidase S8 domain maps to 18–261 (GSPNALVTDF…FGEVSPSRLE (244 aa)). Residues 240 to 370 (RVTDRWTHRN…TTEGTCHGIR (131 aa)) enclose the P/Homo B domain.

Belongs to the peptidase S8 family.

The chain is Subtilisin-like protease (ORF47) from Ictalurid herpesvirus 1 (strain Auburn) (IcHV-1).